Reading from the N-terminus, the 121-residue chain is Cell division protein FtsL (121 aa).

Residues Met1–Arg34 are Cytoplasmic-facing. A helical transmembrane segment spans residues Phe35–Ala57. At His58–Lys121 the chain is on the periplasmic side.

Belongs to the FtsL family. In terms of assembly, part of a complex composed of FtsB, FtsL and FtsQ.

It is found in the cell inner membrane. Essential cell division protein. May link together the upstream cell division proteins, which are predominantly cytoplasmic, with the downstream cell division proteins, which are predominantly periplasmic. The protein is Cell division protein FtsL of Shigella dysenteriae serotype 1 (strain Sd197).